A 427-amino-acid chain; its full sequence is Inward rectifier potassium channel 2 (427 aa).

At 1 to 81 (MGSVRTNRYS…IFTTCVDIRW (81 aa)) the chain is on the cytoplasmic side. The residue at position 76 (cysteine 76) is an S-nitrosocysteine. The chain crosses the membrane as a helical span at residues 82–106 (RWMLVIFCLAFVLSWLFFGCVFWLI). The Extracellular portion of the chain corresponds to 107-128 (ALLHGDLDASKESKACVSEVNS). Positions 129 to 140 (FTAAFLFSIETQ) form an intramembrane region, helical; Pore-forming. Residues 141-147 (TTIGYGF) constitute an intramembrane region (pore-forming). The short motif at 142–147 (TIGYGF) is the Selectivity filter element. Over 148–156 (RCVTDECPI) the chain is Extracellular. Residues 157-178 (AVFMVVFQSIVGCIIDAFIIGA) traverse the membrane as a helical segment. The Cytoplasmic segment spans residues 179–427 (VMAKMAKPKK…PRPLRRESEI (249 aa)). The polyphosphoinositide (PIP2)-binding stretch occupies residues 181-208 (AKMAKPKKRNETLVFSHNAVIAMRDGKL). Positions 383-427 (TSKEEEDSENGVPESTSTDSPPGIDLHNQASVPLEPRPLRRESEI) are disordered. Residues 425-427 (SEI) carry the PDZ-binding motif.

It belongs to the inward rectifier-type potassium channel (TC 1.A.2.1) family. KCNJ2 subfamily. In terms of assembly, homotetramer. Homomultimeric and heteromultimeric association with KCNJ4/Kir2.3. Can form heteromeric channels with Kir2.6/KCNJ18. Associates, via its PDZ-recognition domain, with a complex containing LIN7A, LIN7B, LIN7C, DLG1, CASK and APBA1. S-nitrosylation increases the open probability and inward rectifying currents. As to expression, prominently expressed in the central nervous system. Also found in other excitable tissues such as heart and skeletal muscle.

It localises to the cell membrane. The protein localises to the sarcolemma. Its subcellular location is the T-tubule. The catalysed reaction is K(+)(in) = K(+)(out). Activated by phosphatidylinositol 4,5 biphosphate (PtdIns(4,5)P2). Functionally, inward rectifier potassium channels are characterized by a greater tendency to allow potassium to flow into the cell rather than out of it. Their voltage dependence is regulated by the concentration of extracellular potassium; as external potassium is raised, the voltage range of the channel opening shifts to more positive voltages. The inward rectification is mainly due to the blockage of outward current by internal magnesium. Can be blocked by extracellular barium and cesium. Probably participates in establishing action potential waveform and excitability of neuronal and muscle tissues. The protein is Inward rectifier potassium channel 2 (Kcnj2) of Rattus norvegicus (Rat).